A 420-amino-acid polypeptide reads, in one-letter code: Transcription factor IIIB 50 kDa subunit (420 aa).

A TFIIB-type zinc finger spans residues 3–36 (NGSRCPDCGSSELVEDSHYSQSQLVCSDCGCVVT). 4 residues coordinate Zn(2+): C7, C10, C28, and C31. Tandem repeats lie at residues 72–157 (DLRR…MQMV) and 173–249 (VKSY…SLAQ). Residues 108 to 114 (AARLQKK) form an interaction with target DNA region. Residues 316 to 387 (TAEVETQQQQ…AVTGDEDISD (72 aa)) form a disordered region. The span at 322-336 (QQQQQQQQGQGQGQQ) shows a compositional bias: low complexity. S354 bears the Phosphoserine mark. Positions 358–364 (LLPPCML) are required for the formation of a ternary complex with DNA and TBP; not required for interaction with TBP in the absence of DNA. Cysteine sulfenic acid (-SOH) is present on C362. The segment at 366–420 (PPKRTHTLPPESAVTGDEDISDSEIEQYLRTPQEVRDFERAQAASQAAMRVPNPP) is required for interaction with TBP and formation of a ternary complex with DNA and TBP.

This sequence belongs to the TFIIB family. Component of TFIIIB complexes. The TFIIIB complex has two activities, alpha and beta. The TFIIIB-alpha activity complex is composed of TBP, BDP1, and a complex containing both BRF2 and at least four stably associated proteins; this complex inhibits the transcription by pol III via its phosphorylation by CK2; YY1 facilitates the TFIIIB-alpha complex formation. Interacts with TBP; this interaction promotes recruitment of BRF2 to TATA box-containing promoters. Interacts with TBP and the BURE sequence (GC-rich sequence downstream from the TATA box) to form a strong ternary complex which is joined by BDP1; this ternary complex stimulates pol III transcription. Forms a trimeric complex composed of TBP, BRF2 and mini-SNAPc complex (SNAP43, SNAP50, and the N-terminal third of SNAP190) on the promoter. Assembly of the TBP-BRF2 complex is stimulated by SNAP190. Interacts with MAF1 and SNAPC4. In response to oxidative stress, Cys-362 is reversibly oxidized to cysteine sulfenic acid. Oxidation of Cys-362 impairs formation of a ternary complex with TBP and DNA and down-regulates expression of target genes in response to oxidative stress.

Its subcellular location is the nucleus. General activator of RNA polymerase III transcription. Factor exclusively required for RNA polymerase III transcription of genes with promoter elements upstream of the initiation sites. Contributes to the regulation of gene expression; functions as activator in the absence of oxidative stress. Down-regulates expression of target genes in response to oxidative stress. Overexpression protects cells against apoptosis in response to oxidative stress. This Mus musculus (Mouse) protein is Transcription factor IIIB 50 kDa subunit (Brf2).